A 303-amino-acid chain; its full sequence is uncharacterized protein (303 aa).

NADP(+) contacts are provided by residues 7 to 12 (GAGGVG) and asparagine 101. Lysine 184 functions as the Proton donor in the catalytic mechanism. Position 267 (glutamate 267) interacts with NADP(+).

It belongs to the ketopantoate reductase family.

This is an uncharacterized protein from Bacillus subtilis (strain 168).